Reading from the N-terminus, the 484-residue chain is MKLIVKTFQEITIKSRPVRKRFIRQLAKNIRAVLRDLDPELKVEGEWDNLEVETAVVDARVRREMIERLTCTPGIGHFLEVHEYPLGDFDDILAKCKAHFGDQLAGKMFAVRCKRAGKHAFTSMEVERYVGSGLRRECGAAGIDLKQPEVEVRMEIRLDRLFVIHRQHPGLGGYPLGALEQVLVLMSGGFDSTVAAYQMMRRGMISHFVFFNLGGRAHELGVMEVAHYLWEKYGRSQRVLFVSVPFEEVVGEILTKVDDSYMGVTLKRMMLRAASRVAERLELDALVTGEAISQVSSQTLPNLSVIDRVTDTLVLRPLIVSHKQDIIDTARQIGTAEFARHMPEYCGVISVNPTTQAKPYRVEHEESKFDMAVLERALERATQRTVDRVIDELGQDLSVEEVAEVLPGQIVIDIRHPDAQEDEPLALEGVEVQALPFYAINSRFKELDANRQYLLYCDKGVMSRLHAHHLLNEGHTNVRVYRPA.

Positions Arg63–Gln167 constitute a THUMP domain. ATP-binding positions include Leu185 to Met186, Lys267, Gly289, and Gln298. Cys346 and Cys457 are disulfide-bonded. One can recognise a Rhodanese domain in the interval Val405–Pro483. The Cysteine persulfide intermediate role is filled by Cys457.

The protein belongs to the ThiI family.

Its subcellular location is the cytoplasm. It carries out the reaction [ThiI sulfur-carrier protein]-S-sulfanyl-L-cysteine + a uridine in tRNA + 2 reduced [2Fe-2S]-[ferredoxin] + ATP + H(+) = [ThiI sulfur-carrier protein]-L-cysteine + a 4-thiouridine in tRNA + 2 oxidized [2Fe-2S]-[ferredoxin] + AMP + diphosphate. It catalyses the reaction [ThiS sulfur-carrier protein]-C-terminal Gly-Gly-AMP + S-sulfanyl-L-cysteinyl-[cysteine desulfurase] + AH2 = [ThiS sulfur-carrier protein]-C-terminal-Gly-aminoethanethioate + L-cysteinyl-[cysteine desulfurase] + A + AMP + 2 H(+). Its pathway is cofactor biosynthesis; thiamine diphosphate biosynthesis. Its function is as follows. Catalyzes the ATP-dependent transfer of a sulfur to tRNA to produce 4-thiouridine in position 8 of tRNAs, which functions as a near-UV photosensor. Also catalyzes the transfer of sulfur to the sulfur carrier protein ThiS, forming ThiS-thiocarboxylate. This is a step in the synthesis of thiazole, in the thiamine biosynthesis pathway. The sulfur is donated as persulfide by IscS. The chain is tRNA sulfurtransferase from Pseudomonas paraeruginosa (strain DSM 24068 / PA7) (Pseudomonas aeruginosa (strain PA7)).